We begin with the raw amino-acid sequence, 211 residues long: Large ribosomal subunit protein uL4 (211 aa).

The disordered stretch occupies residues 40-80 (QQAHSRQGTASTLTRSEVRGGGRKPYKQKGTGRARQGSIRT). The segment covering 41–54 (QAHSRQGTASTLTR) has biased composition (polar residues). A compositionally biased stretch (basic residues) spans 60-71 (GGRKPYKQKGTG).

Belongs to the universal ribosomal protein uL4 family. In terms of assembly, part of the 50S ribosomal subunit.

Its function is as follows. One of the primary rRNA binding proteins, this protein initially binds near the 5'-end of the 23S rRNA. It is important during the early stages of 50S assembly. It makes multiple contacts with different domains of the 23S rRNA in the assembled 50S subunit and ribosome. In terms of biological role, forms part of the polypeptide exit tunnel. The chain is Large ribosomal subunit protein uL4 from Prochlorococcus marinus (strain MIT 9211).